The following is a 383-amino-acid chain: Photosynthetic reaction center cytochrome c subunit (383 aa).

The first 22 residues, 1–22, serve as a signal peptide directing secretion; the sequence is MNLGKQLTLPAVAVVASVVLLG. Residue C23 is the site of N-palmitoyl cysteine attachment. C23 carries S-diacylglycerol cysteine lipidation. The heme site is built by M94, C107, C110, H111, M130, H144, C152, C155, H156, M236, C247, C250, H251, C307, C310, and H311. Positions 335–383 are disordered; sequence PAEAAPATEEAPAAEAEAVEAAPVEEAAPAPVEQAAAPVEDAAPAPQQL.

Component of the photosynthetic reaction center composed of protein subunits L (PufL), M (PufM), H (PuhA) and cytochrome C (PufC). The reaction center interacts with light-harvesting antenna complex LH1. Binds 4 heme groups per subunit.

It is found in the cellular chromatophore membrane. In terms of biological role, the reaction center of purple bacteria contains a tightly bound cytochrome molecule which re-reduces the photo oxidized primary electron donor. The polypeptide is Photosynthetic reaction center cytochrome c subunit (pufC) (Allochromatium vinosum (strain ATCC 17899 / DSM 180 / NBRC 103801 / NCIMB 10441 / D) (Chromatium vinosum)).